The chain runs to 356 residues: DNA integrity scanning protein DisA (356 aa).

The DAC domain occupies 7-147 (NKNMLYALKM…EKYVVEDISK (141 aa)). Residues Gly74, Leu92, and 105-109 (TRHRT) contribute to the ATP site.

Belongs to the DisA family. In terms of assembly, homooctamer. Mg(2+) is required as a cofactor.

It catalyses the reaction 2 ATP = 3',3'-c-di-AMP + 2 diphosphate. Participates in a DNA-damage check-point that is active prior to asymmetric division when DNA is damaged. DisA forms globular foci that rapidly scan along the chromosomes during sporulation, searching for lesions. When a lesion is present, DisA pauses at the lesion site. This triggers a cellular response that culminates in a temporary block in sporulation initiation. Functionally, also has diadenylate cyclase activity, catalyzing the condensation of 2 ATP molecules into cyclic di-AMP (c-di-AMP). c-di-AMP acts as a signaling molecule that couples DNA integrity with progression of sporulation. The rise in c-di-AMP level generated by DisA while scanning the chromosome, operates as a positive signal that advances sporulation; upon encountering a lesion, the DisA focus arrests at the damaged site and halts c-di-AMP synthesis. This Clostridioides difficile (strain 630) (Peptoclostridium difficile) protein is DNA integrity scanning protein DisA.